The primary structure comprises 208 residues: Redox-sensing transcriptional repressor Rex (208 aa).

Residues 15–54 (SYYMCLERLLDEGVEVVSSEELARRLDLKASQIRKDLSYF) constitute a DNA-binding region (H-T-H motif). 89–94 (GAGNIG) contributes to the NAD(+) binding site.

The protein belongs to the transcriptional regulatory Rex family. Homodimer.

The protein localises to the cytoplasm. In terms of biological role, modulates transcription in response to changes in cellular NADH/NAD(+) redox state. The protein is Redox-sensing transcriptional repressor Rex of Thermotoga petrophila (strain ATCC BAA-488 / DSM 13995 / JCM 10881 / RKU-1).